Consider the following 497-residue polypeptide: tRNA-2-methylthio-N(6)-dimethylallyladenosine synthase (497 aa).

In terms of domain architecture, MTTase N-terminal spans 4-120; it reads RSYEVRTFGC…LPVLLERARH (117 aa). Positions 13, 49, 83, 157, 161, and 164 each coordinate [4Fe-4S] cluster. The Radical SAM core domain occupies 143–374; it reads RASHHSAWVS…ALQDEVSWAQ (232 aa). Residues 376-445 enclose the TRAM domain; the sequence is RELVGRRVEL…PHHLTADGPL (70 aa).

This sequence belongs to the methylthiotransferase family. MiaB subfamily. As to quaternary structure, monomer. The cofactor is [4Fe-4S] cluster.

It localises to the cytoplasm. It carries out the reaction N(6)-dimethylallyladenosine(37) in tRNA + (sulfur carrier)-SH + AH2 + 2 S-adenosyl-L-methionine = 2-methylsulfanyl-N(6)-dimethylallyladenosine(37) in tRNA + (sulfur carrier)-H + 5'-deoxyadenosine + L-methionine + A + S-adenosyl-L-homocysteine + 2 H(+). Its function is as follows. Catalyzes the methylthiolation of N6-(dimethylallyl)adenosine (i(6)A), leading to the formation of 2-methylthio-N6-(dimethylallyl)adenosine (ms(2)i(6)A) at position 37 in tRNAs that read codons beginning with uridine. The protein is tRNA-2-methylthio-N(6)-dimethylallyladenosine synthase of Frankia alni (strain DSM 45986 / CECT 9034 / ACN14a).